We begin with the raw amino-acid sequence, 203 residues long: HTH-type transcriptional regulator BetI (203 aa).

The HTH tetR-type domain maps to 8–68 (PVRRKALVDA…ATIRSLLGKL (61 aa)). Residues 31 to 50 (TMSEIARTAGVSPALAHHYF) constitute a DNA-binding region (H-T-H motif).

It participates in amine and polyamine biosynthesis; betaine biosynthesis via choline pathway [regulation]. Functionally, repressor involved in the biosynthesis of the osmoprotectant glycine betaine. It represses transcription of the choline transporter BetT and the genes of BetAB involved in the synthesis of glycine betaine. The polypeptide is HTH-type transcriptional regulator BetI (Rhizobium meliloti (strain 1021) (Ensifer meliloti)).